Reading from the N-terminus, the 396-residue chain is Elongation factor Tu 2 (396 aa).

The tr-type G domain maps to 10–206 (KPHVNVGTIG…TLDTYIPEPE (197 aa)). Residues 19-26 (GHVDHGKT) are G1. 19 to 26 (GHVDHGKT) is a GTP binding site. Threonine 26 is a Mg(2+) binding site. The tract at residues 60–64 (GITIN) is G2. A G3 region spans residues 81–84 (DCPG). GTP contacts are provided by residues 81–85 (DCPGH) and 136–139 (NKCD). Residues 136 to 139 (NKCD) are G4. The tract at residues 174-176 (SAL) is G5.

Belongs to the TRAFAC class translation factor GTPase superfamily. Classic translation factor GTPase family. EF-Tu/EF-1A subfamily. Monomer.

Its subcellular location is the cytoplasm. It carries out the reaction GTP + H2O = GDP + phosphate + H(+). GTP hydrolase that promotes the GTP-dependent binding of aminoacyl-tRNA to the A-site of ribosomes during protein biosynthesis. The polypeptide is Elongation factor Tu 2 (Psychrobacter sp. (strain PRwf-1)).